The sequence spans 440 residues: Xylose isomerase (440 aa).

Active-site residues include His101 and Asp104. Positions 232, 268, 271, 296, 307, 309, and 339 each coordinate Mg(2+).

The protein belongs to the xylose isomerase family. In terms of assembly, homotetramer. The cofactor is Mg(2+).

It is found in the cytoplasm. The catalysed reaction is alpha-D-xylose = alpha-D-xylulofuranose. The sequence is that of Xylose isomerase from Escherichia coli O17:K52:H18 (strain UMN026 / ExPEC).